The sequence spans 620 residues: Arginine--tRNA ligase (620 aa).

The 'HIGH' region motif lies at 147–157 (ANPTGPIHIGG).

It belongs to the class-I aminoacyl-tRNA synthetase family. As to quaternary structure, monomer.

The protein localises to the cytoplasm. The catalysed reaction is tRNA(Arg) + L-arginine + ATP = L-arginyl-tRNA(Arg) + AMP + diphosphate. The polypeptide is Arginine--tRNA ligase (Bifidobacterium longum (strain NCC 2705)).